The sequence spans 1172 residues: Carbamoyl phosphate synthase arginine-specific large chain, chloroplastic (1172 aa).

A compositionally biased stretch (polar residues) spans 1 to 10 (MATSLSSAPT). The disordered stretch occupies residues 1 to 37 (MATSLSSAPTQLRPSPSPSHHRLLHRSSLLPFPRRHH). A chloroplast-targeting transit peptide spans 1 to 50 (MATSLSSAPTQLRPSPSPSHHRLLHRSSLLPFPRRHHHRRRRCGALSIAR). The carboxyphosphate synthetic domain stretch occupies residues 72–473 (GRLAGVRKIM…SFQKAVRSLE (402 aa)). Residues Arg-199, Arg-240, Gly-246, Gly-247, Lys-279, Leu-281, Glu-286, Gly-312, Val-313, His-314, Gln-356, and Glu-370 each contribute to the ATP site. The ATP-grasp 1 domain occupies 203–399 (KQAMDRIGLK…IAKMAAKLSV (197 aa)). Mg(2+) is bound by residues Gln-356, Glu-370, and Asn-372. The tract at residues 474 to 623 (TGFAGWGCAP…YSSYEYECES (150 aa)) is oligomerization domain. Positions 624 to 1019 (VPTNKKKVLI…GAFAKAQIAA (396 aa)) are carbamoyl phosphate synthetic domain. Residues 761–954 (NAILEELGIE…LAKYASLVMS (194 aa)) enclose the ATP-grasp 2 domain. Residues Arg-797, Lys-836, Leu-838, Glu-843, Gly-869, Ile-870, His-871, Ser-872, Gln-912, and Glu-925 each contribute to the ATP site. Gln-912, Glu-925, and Asn-927 together coordinate Mg(2+). Residues 1020 to 1172 (GQKLPLNGTV…QNLQAAQSAS (153 aa)) form an allosteric domain region. Residues 1021–1162 (QKLPLNGTVF…QDYFQTTDAS (142 aa)) enclose the MGS-like domain.

It belongs to the CarB family. In terms of assembly, heterodimer composed of 2 chains; the small (or glutamine) chain promotes the hydrolysis of glutamine to ammonia, which is used by the large (or ammonia) chain to synthesize carbamoyl phosphate. Mg(2+) is required as a cofactor. The cofactor is Mn(2+).

It localises to the plastid. It is found in the chloroplast. The enzyme catalyses hydrogencarbonate + L-glutamine + 2 ATP + H2O = carbamoyl phosphate + L-glutamate + 2 ADP + phosphate + 2 H(+). It catalyses the reaction hydrogencarbonate + NH4(+) + 2 ATP = carbamoyl phosphate + 2 ADP + phosphate + 2 H(+). Its pathway is amino-acid biosynthesis; L-arginine biosynthesis; carbamoyl phosphate from bicarbonate: step 1/1. Its function is as follows. Large subunit of the arginine-specific carbamoyl phosphate synthase (CPSase). CPSase catalyzes the formation of carbamoyl phosphate from the ammonia moiety of glutamine, hydrogencarbonate, and phosphate donated by ATP, constituting the first step of 2 biosynthetic pathways, one leading to arginine and/or urea and the other to pyrimidine nucleotides. The large subunit (synthetase) binds the substrates ammonia (free or transferred from glutamine from the small subunit), hydrogencarbonate and ATP and carries out an ATP-coupled ligase reaction, activating hydrogencarbonate by forming carboxy phosphate which reacts with ammonia to form carbamoyl phosphate. This Oryza sativa subsp. japonica (Rice) protein is Carbamoyl phosphate synthase arginine-specific large chain, chloroplastic (CARB).